The following is a 622-amino-acid chain: Probable E3 ubiquitin-protein ligase DTX2 (622 aa).

WWE domains lie at 8–97 (SLVQ…AVRR) and 98–174 (HLFP…SVRR). 3 positions are modified to asymmetric dimethylarginine: Arg-213, Arg-215, and Arg-233. Position 249 is an N6-acetyllysine (Lys-249). 2 disordered regions span residues 249 to 324 (KPSL…VPMQ) and 355 to 393 (APQP…EPEP). Arg-256 carries the omega-N-methylarginine modification. A compositionally biased stretch (polar residues) spans 274–285 (LGSQPLYRSSLS). Residues 299–322 (SGAVSASLPSGPSSSPGSVPATVP) are compositionally biased toward low complexity. Ser-360 is modified (phosphoserine). Over residues 372–381 (GSVKRLRKMS) the composition is skewed to basic residues. An RING-type zinc finger spans residues 412–473 (CIICMEKLST…DGSLQCPSCK (62 aa)).

This sequence belongs to the Deltex family. As to quaternary structure, homodimer. May form a heterodimer with other members of the Deltex family. Interacts with NOTCH1.

The protein resides in the cytoplasm. Its subcellular location is the nucleus. The enzyme catalyses S-ubiquitinyl-[E2 ubiquitin-conjugating enzyme]-L-cysteine + [acceptor protein]-L-lysine = [E2 ubiquitin-conjugating enzyme]-L-cysteine + N(6)-ubiquitinyl-[acceptor protein]-L-lysine.. It functions in the pathway protein modification; protein ubiquitination. In terms of biological role, regulator of Notch signaling, a signaling pathway involved in cell-cell communications that regulates a broad spectrum of cell-fate determinations. Probably acts both as a positive and negative regulator of Notch, depending on the developmental and cell context. Mediates the antineural activity of Notch, possibly by inhibiting the transcriptional activation mediated by MATCH1. Functions as a ubiquitin ligase protein in vitro, suggesting that it may regulate the Notch pathway via some ubiquitin ligase activity. The chain is Probable E3 ubiquitin-protein ligase DTX2 (DTX2) from Homo sapiens (Human).